The following is a 257-amino-acid chain: Transcription factor bHLH55 (257 aa).

The bHLH domain occupies 74 to 126; the sequence is NKRAKHKELERQRRQENTSLFKILRYLLPSQYIKGKRSSADHVLEAVNYIKDL.

In terms of assembly, homodimer. In terms of tissue distribution, expressed in roots, leaves, stems, and flowers.

The protein localises to the nucleus. In Arabidopsis thaliana (Mouse-ear cress), this protein is Transcription factor bHLH55 (BHLH55).